A 604-amino-acid chain; its full sequence is Elongation factor 4 (604 aa).

One can recognise a tr-type G domain in the interval 4–186 (EFIRNFSIIA…AIVHLVPPPK (183 aa)). GTP-binding positions include 16-21 (DHGKST) and 133-136 (NKID).

The protein belongs to the TRAFAC class translation factor GTPase superfamily. Classic translation factor GTPase family. LepA subfamily.

The protein resides in the cell inner membrane. It carries out the reaction GTP + H2O = GDP + phosphate + H(+). Its function is as follows. Required for accurate and efficient protein synthesis under certain stress conditions. May act as a fidelity factor of the translation reaction, by catalyzing a one-codon backward translocation of tRNAs on improperly translocated ribosomes. Back-translocation proceeds from a post-translocation (POST) complex to a pre-translocation (PRE) complex, thus giving elongation factor G a second chance to translocate the tRNAs correctly. Binds to ribosomes in a GTP-dependent manner. The protein is Elongation factor 4 of Solibacter usitatus (strain Ellin6076).